Here is a 269-residue protein sequence, read N- to C-terminus: Ribosomal RNA small subunit methyltransferase A (269 aa).

Residues N18, L20, G45, E66, D91, and N112 each contribute to the S-adenosyl-L-methionine site.

It belongs to the class I-like SAM-binding methyltransferase superfamily. rRNA adenine N(6)-methyltransferase family. RsmA subfamily.

It is found in the cytoplasm. It catalyses the reaction adenosine(1518)/adenosine(1519) in 16S rRNA + 4 S-adenosyl-L-methionine = N(6)-dimethyladenosine(1518)/N(6)-dimethyladenosine(1519) in 16S rRNA + 4 S-adenosyl-L-homocysteine + 4 H(+). Specifically dimethylates two adjacent adenosines (A1518 and A1519) in the loop of a conserved hairpin near the 3'-end of 16S rRNA in the 30S particle. May play a critical role in biogenesis of 30S subunits. This chain is Ribosomal RNA small subunit methyltransferase A, found in Vibrio parahaemolyticus serotype O3:K6 (strain RIMD 2210633).